Here is a 101-residue protein sequence, read N- to C-terminus: Iron-sulfur cluster assembly protein CyaY (101 aa).

This sequence belongs to the frataxin family.

Involved in iron-sulfur (Fe-S) cluster assembly. May act as a regulator of Fe-S biogenesis. The protein is Iron-sulfur cluster assembly protein CyaY of Rickettsia akari (strain Hartford).